Here is a 486-residue protein sequence, read N- to C-terminus: Maintenance of mitochondrial morphology protein 1 (486 aa).

Residues 1–19 (MSNDTSAQPAQSSLSFTQG) are Lumenal-facing. The helical transmembrane segment at 20-40 (LLVGQLSVVLLIGAFIKFFIF) threads the bilayer. Residues 41-486 (GEASPSSSRS…GSLPDVVPVT (446 aa)) lie on the Cytoplasmic side of the membrane. 4 disordered regions span residues 45–98 (PSSS…RSIL), 269–318 (QTST…AGTT), 393–412 (VRGQ…GVST), and 420–486 (ARDA…VPVT). Residues 51 to 61 (QTRRTSPHKRS) are compositionally biased toward basic residues. The span at 70 to 79 (LGSRSLKEKP) shows a compositional bias: basic and acidic residues. 4 stretches are compositionally biased toward polar residues: residues 80–96 (SSNV…NTRS), 269–291 (QTST…NDYS), 307–318 (EQATQANNAGTT), and 401–412 (EVGSSGNAGVST). Positions 125-382 (QPESLDWFNV…EPRVQVVALP (258 aa)) constitute an SMP-LTD domain. Basic and acidic residues-rich tracts occupy residues 429 to 440 (HATRDADMEGLR) and 462 to 473 (DSREQACRDDPF).

The protein belongs to the MMM1 family. As to quaternary structure, homodimer. Component of the ER-mitochondria encounter structure (ERMES) or MDM complex, composed of MMM1, MDM10, MDM12 and MDM34. An MMM1 homodimer associates with one molecule of MDM12 on each side in a pairwise head-to-tail manner, and the SMP-LTD domains of MMM1 and MDM12 generate a continuous hydrophobic tunnel for phospholipid trafficking.

Its subcellular location is the endoplasmic reticulum membrane. In terms of biological role, component of the ERMES/MDM complex, which serves as a molecular tether to connect the endoplasmic reticulum (ER) and mitochondria. Components of this complex are involved in the control of mitochondrial shape and protein biogenesis, and function in nonvesicular lipid trafficking between the ER and mitochondria. The MDM12-MMM1 subcomplex functions in the major beta-barrel assembly pathway that is responsible for biogenesis of all outer membrane beta-barrel proteins, and acts in a late step after the SAM complex. The MDM10-MDM12-MMM1 subcomplex further acts in the TOM40-specific pathway after the action of the MDM12-MMM1 complex. Essential for establishing and maintaining the structure of mitochondria and maintenance of mtDNA nucleoids. In Coccidioides immitis (strain RS) (Valley fever fungus), this protein is Maintenance of mitochondrial morphology protein 1.